A 171-amino-acid polypeptide reads, in one-letter code: Ribosome maturation factor RimM (171 aa).

The PRC barrel domain maps to Glu97 to Leu170.

Belongs to the RimM family. In terms of assembly, binds ribosomal protein uS19.

It localises to the cytoplasm. An accessory protein needed during the final step in the assembly of 30S ribosomal subunit, possibly for assembly of the head region. Essential for efficient processing of 16S rRNA. May be needed both before and after RbfA during the maturation of 16S rRNA. It has affinity for free ribosomal 30S subunits but not for 70S ribosomes. The chain is Ribosome maturation factor RimM from Bacillus thuringiensis (strain Al Hakam).